A 138-amino-acid polypeptide reads, in one-letter code: Large ribosomal subunit protein uL16 (138 aa).

The segment covering 1–13 (MLQPARRKYRKEQ) has biased composition (basic residues). Residues 1–22 (MLQPARRKYRKEQKGRNTGVAT) are disordered.

Belongs to the universal ribosomal protein uL16 family. Part of the 50S ribosomal subunit.

Binds 23S rRNA and is also seen to make contacts with the A and possibly P site tRNAs. This chain is Large ribosomal subunit protein uL16, found in Polaromonas sp. (strain JS666 / ATCC BAA-500).